Here is a 130-residue protein sequence, read N- to C-terminus: Small ribosomal subunit protein uS9 (130 aa).

It belongs to the universal ribosomal protein uS9 family.

In Streptococcus mutans serotype c (strain ATCC 700610 / UA159), this protein is Small ribosomal subunit protein uS9.